Consider the following 335-residue polypeptide: MFLTILAGLIAFAVTALAMPHFIRLYQLKKIGGQQMHEDVKQHLAKAGTPTMGGTVFLLVATSLSFVFALVYFRDGQSLGLISGILLIVLIYGIIGFLDDFLKIFKQVNEGLTAKQKFTLQIVGGLVFYVIHVMPSGIDAINVFGYHWHLGFLYLCFVLFWVVGFSNAVNLTDGIDGLASVSVVISLLAYGVIAYAQGQFDVLLLIGIMVGALLAFFLFNHKPAKIFMGDVGSLALGAMLAAISIALRQEWTLLVIGIVYVLETSSVMLQVTYFKYTKKKYGEGRRIFRMTPFHHHLELGGLSGKAAKWSEWKVDAFLWALGLVASLIVLAILYL.

Helical transmembrane passes span 3–23 (LTILAGLIAFAVTALAMPHFI), 53–73 (GGTVFLLVATSLSFVFALVYF), 78–98 (SLGLISGILLIVLIYGIIGFL), 118–138 (FTLQIVGGLVFYVIHVMPSGI), 143–163 (VFGYHWHLGFLYLCFVLFWVV), 174–194 (GIDGLASVSVVISLLAYGVIA), 200–220 (FDVLLLIGIMVGALLAFFLFN), 226–246 (IFMGDVGSLALGAMLAAISIA), 251–271 (WTLLVIGIVYVLETSSVMLQV), and 314–334 (VDAFLWALGLVASLIVLAILY).

Belongs to the glycosyltransferase 4 family. MraY subfamily. Requires Mg(2+) as cofactor.

It is found in the cell membrane. The enzyme catalyses UDP-N-acetyl-alpha-D-muramoyl-L-alanyl-gamma-D-glutamyl-L-lysyl-D-alanyl-D-alanine + di-trans,octa-cis-undecaprenyl phosphate = Mur2Ac(oyl-L-Ala-gamma-D-Glu-L-Lys-D-Ala-D-Ala)-di-trans,octa-cis-undecaprenyl diphosphate + UMP. Its pathway is cell wall biogenesis; peptidoglycan biosynthesis. Functionally, catalyzes the initial step of the lipid cycle reactions in the biosynthesis of the cell wall peptidoglycan: transfers peptidoglycan precursor phospho-MurNAc-pentapeptide from UDP-MurNAc-pentapeptide onto the lipid carrier undecaprenyl phosphate, yielding undecaprenyl-pyrophosphoryl-MurNAc-pentapeptide, known as lipid I. This Streptococcus equi subsp. zooepidemicus (strain MGCS10565) protein is Phospho-N-acetylmuramoyl-pentapeptide-transferase.